Here is a 104-residue protein sequence, read N- to C-terminus: Pyrimidine/purine nucleoside phosphorylase (104 aa).

This sequence belongs to the nucleoside phosphorylase PpnP family.

It catalyses the reaction a purine D-ribonucleoside + phosphate = a purine nucleobase + alpha-D-ribose 1-phosphate. The catalysed reaction is adenosine + phosphate = alpha-D-ribose 1-phosphate + adenine. The enzyme catalyses cytidine + phosphate = cytosine + alpha-D-ribose 1-phosphate. It carries out the reaction guanosine + phosphate = alpha-D-ribose 1-phosphate + guanine. It catalyses the reaction inosine + phosphate = alpha-D-ribose 1-phosphate + hypoxanthine. The catalysed reaction is thymidine + phosphate = 2-deoxy-alpha-D-ribose 1-phosphate + thymine. The enzyme catalyses uridine + phosphate = alpha-D-ribose 1-phosphate + uracil. It carries out the reaction xanthosine + phosphate = alpha-D-ribose 1-phosphate + xanthine. In terms of biological role, catalyzes the phosphorolysis of diverse nucleosides, yielding D-ribose 1-phosphate and the respective free bases. Can use uridine, adenosine, guanosine, cytidine, thymidine, inosine and xanthosine as substrates. Also catalyzes the reverse reactions. The polypeptide is Pyrimidine/purine nucleoside phosphorylase (Leptothrix cholodnii (strain ATCC 51168 / LMG 8142 / SP-6) (Leptothrix discophora (strain SP-6))).